The chain runs to 363 residues: Putative aryl-alcohol dehydrogenase AAD3 (363 aa).

Belongs to the aldo/keto reductase family. Aldo/keto reductase 2 subfamily.

This is Putative aryl-alcohol dehydrogenase AAD3 (AAD3) from Saccharomyces cerevisiae (strain ATCC 204508 / S288c) (Baker's yeast).